A 102-amino-acid polypeptide reads, in one-letter code: Small ribosomal subunit protein uS17 (102 aa).

The interval 1–27 (MEQTEEHTDTHTDEQDEAVDRNDRKER) is disordered.

It belongs to the universal ribosomal protein uS17 family. Part of the 30S ribosomal subunit.

In terms of biological role, one of the primary rRNA binding proteins, it binds specifically to the 5'-end of 16S ribosomal RNA. The chain is Small ribosomal subunit protein uS17 from Salinibacter ruber (strain DSM 13855 / M31).